Consider the following 356-residue polypeptide: DNA polymerase IV (356 aa).

A UmuC domain is found at 7–188 (IIHIDMDAFY…IPVTKFYGVG (182 aa)). 2 residues coordinate Mg(2+): aspartate 11 and aspartate 106. The active site involves glutamate 107.

The protein belongs to the DNA polymerase type-Y family. As to quaternary structure, monomer. Mg(2+) is required as a cofactor.

Its subcellular location is the cytoplasm. The catalysed reaction is DNA(n) + a 2'-deoxyribonucleoside 5'-triphosphate = DNA(n+1) + diphosphate. In terms of biological role, poorly processive, error-prone DNA polymerase involved in untargeted mutagenesis. Copies undamaged DNA at stalled replication forks, which arise in vivo from mismatched or misaligned primer ends. These misaligned primers can be extended by PolIV. Exhibits no 3'-5' exonuclease (proofreading) activity. May be involved in translesional synthesis, in conjunction with the beta clamp from PolIII. This chain is DNA polymerase IV, found in Listeria welshimeri serovar 6b (strain ATCC 35897 / DSM 20650 / CCUG 15529 / CIP 8149 / NCTC 11857 / SLCC 5334 / V8).